Reading from the N-terminus, the 217-residue chain is Protein-L-isoaspartate O-methyltransferase (217 aa).

Ser-64 is a catalytic residue.

This sequence belongs to the methyltransferase superfamily. L-isoaspartyl/D-aspartyl protein methyltransferase family.

Its subcellular location is the cytoplasm. The enzyme catalyses [protein]-L-isoaspartate + S-adenosyl-L-methionine = [protein]-L-isoaspartate alpha-methyl ester + S-adenosyl-L-homocysteine. Its function is as follows. Catalyzes the methyl esterification of L-isoaspartyl residues in peptides and proteins that result from spontaneous decomposition of normal L-aspartyl and L-asparaginyl residues. It plays a role in the repair and/or degradation of damaged proteins. The sequence is that of Protein-L-isoaspartate O-methyltransferase from Azorhizobium caulinodans (strain ATCC 43989 / DSM 5975 / JCM 20966 / LMG 6465 / NBRC 14845 / NCIMB 13405 / ORS 571).